A 182-amino-acid chain; its full sequence is RNA pyrophosphohydrolase (182 aa).

In terms of domain architecture, Nudix hydrolase spans G6–N149. The Nudix box signature appears at G38–G59. The tract at residues P162 to E182 is disordered.

It belongs to the Nudix hydrolase family. RppH subfamily. It depends on a divalent metal cation as a cofactor.

Accelerates the degradation of transcripts by removing pyrophosphate from the 5'-end of triphosphorylated RNA, leading to a more labile monophosphorylated state that can stimulate subsequent ribonuclease cleavage. The protein is RNA pyrophosphohydrolase of Dechloromonas aromatica (strain RCB).